The primary structure comprises 175 residues: Short chain dehydrogenase/reductase dpmpG (175 aa).

NADP(+) contacts are provided by isoleucine 18, aspartate 71, asparagine 98, and lysine 132.

This sequence belongs to the short-chain dehydrogenases/reductases (SDR) family.

The protein operates within secondary metabolite biosynthesis; terpenoid biosynthesis. Its function is as follows. Short chain dehydrogenase/reductase; part of the gene cluster that mediates the biosynthesis of diterpenoid pyrones. The first step of the pathway is the synthesis of the alpha-pyrone moiety by the polyketide synthase dpmpA via condensation of one acetyl-CoA starter unit with 3 malonyl-CoA units and 2 methylations. The alpha-pyrone is then combined with geranylgeranyl pyrophosphate (GGPP) formed by the GGPP synthase dpmpD through the action of the prenyltransferase dpmpC to yield a linear alpha-pyrone diterpenoid. Subsequent steps in the diterpenoid pyrone biosynthetic pathway involve the decalin core formation, which is initiated by the epoxidation of the C10-C11 olefin by the FAD-dependent oxidoreductase dpmpE, and is followed by a cyclization cascade catalyzed by the terpene cyclase dpmpB. The short chain dehydrogenase/reductase dpmpG then oxidizes the 8S hydroxy group to a ketone and the short chain dehydrogenase/reductase dpmpH reduces the ketone to the 8R hydroxy group to yield higginsianin B. Higginsianin B is further methylated by the methyltransferase dpmpI to produce the intermediate named FDDP B. The cytochrome P450 monooxygenase dpmpJ then oxidizes the C-26 methyl to primary alcohol, producing the final diterpenoid pyrone with a C-26 primary alcohol on the gamma-pyrone moiety named FDDP C. The polypeptide is Short chain dehydrogenase/reductase dpmpG (Macrophomina phaseolina (strain MS6) (Charcoal rot fungus)).